Here is a 698-residue protein sequence, read N- to C-terminus: Superoxide-generating NADPH oxidase heavy chain subunit B (698 aa).

2 disordered regions span residues 1 to 68 (MNEK…NITP) and 134 to 158 (NDQV…NNKN). At 1 to 184 (MNEKKELQQE…KIRGWWWHRG (184 aa)) the chain is on the cytoplasmic side. Polar residues-rich tracts occupy residues 16-25 (FQTPKNQQLE) and 33-53 (EISS…PISQ). Low complexity-rich tracts occupy residues 54–65 (NDNSNNENESLN) and 138–156 (NSNT…TNNN). The helical transmembrane segment at 185-205 (ISTYIMLFYIALNIGVGVHMF) threads the bilayer. The Extracellular segment spans residues 206 to 229 (YNMYHSDIFKFLGLSFCFSRTAAR). The 151-residue stretch at 225 to 375 (RTAARLINLN…LFIPFYILLC (151 aa)) folds into the Ferric oxidoreductase domain. The chain crosses the membrane as a helical span at residues 230–250 (LINLNSAVILLPVLRNFLSWL). The Cytoplasmic segment spans residues 251 to 269 (RGTIVNNYIPIDKHLNFHK). Positions 268 and 282 each coordinate heme. A helical membrane pass occupies residues 270–290 (LCAFMLFCCTIIHCVGHYISF). Residues 291–324 (KKINDDVLKIDDGKSVAGDYLNININNFPDEKYL) lie on the Extracellular side of the membrane. Residues 325–345 (FFKSVPGITGHIMLLILILIV) form a helical membrane-spanning segment. The Cytoplasmic segment spans residues 346 to 355 (SSSMWRIRRP). Residues 356 to 376 (MFEIFWYVHHLFIPFYILLCF) traverse the membrane as a helical segment. Heme is bound by residues His-364 and His-377. At 377-388 (HGYSKILKKDPQ) the chain is on the extracellular side. A helical membrane pass occupies residues 389–409 (SWMWIIAPFILYSIERLIRIA). One can recognise an FAD-binding FR-type domain in the interval 404–528 (RLIRIARSKK…DGPFGAPAEN (125 aa)). The Cytoplasmic segment spans residues 410-698 (RSKKRVILEK…CHLIFHKENF (289 aa)). 460–466 (HPFTITS) serves as a coordination point for FAD.

As to quaternary structure, composed of a heavy chain and a light chain. FAD is required as a cofactor.

It is found in the membrane. Critical component of the membrane-bound oxidase that generates superoxide. It is the terminal component of a respiratory chain that transfers single electrons from cytoplasmic NADPH across the plasma membrane to molecular oxygen on the exterior. In Dictyostelium discoideum (Social amoeba), this protein is Superoxide-generating NADPH oxidase heavy chain subunit B (noxB).